The chain runs to 489 residues: Argininosuccinate lyase (489 aa).

A disordered region spans residues 462 to 489 (QARYQQTEPAEEPPLPPSSPGSGLPLES).

Belongs to the lyase 1 family. Argininosuccinate lyase subfamily.

It is found in the cytoplasm. It carries out the reaction 2-(N(omega)-L-arginino)succinate = fumarate + L-arginine. Its pathway is amino-acid biosynthesis; L-arginine biosynthesis; L-arginine from L-ornithine and carbamoyl phosphate: step 3/3. The sequence is that of Argininosuccinate lyase from Synechococcus sp. (strain JA-3-3Ab) (Cyanobacteria bacterium Yellowstone A-Prime).